The primary structure comprises 200 residues: Small ribosomal subunit protein uS4 (200 aa).

The tract at residues 22 to 43 (TGKELERRPYAPGQHGPTQRKK) is disordered. The region spanning 92–170 (QRLDNIVYRL…VPEYVTFDAE (79 aa)) is the S4 RNA-binding domain.

This sequence belongs to the universal ribosomal protein uS4 family. In terms of assembly, part of the 30S ribosomal subunit. Contacts protein S5. The interaction surface between S4 and S5 is involved in control of translational fidelity.

In terms of biological role, one of the primary rRNA binding proteins, it binds directly to 16S rRNA where it nucleates assembly of the body of the 30S subunit. Functionally, with S5 and S12 plays an important role in translational accuracy. In Listeria monocytogenes serotype 4b (strain F2365), this protein is Small ribosomal subunit protein uS4.